The following is a 501-amino-acid chain: Solute carrier family 2, facilitated glucose transporter member 5 (501 aa).

Met1 carries the post-translational modification N-acetylmethionine. At 1 to 18 the chain is on the cytoplasmic side; it reads MEPQDPVKREGRLTPVIV. Residues 19–39 form a helical membrane-spanning segment; that stretch reads LATLIAAFGSSFQYGYNVAAI. Residue Tyr32 coordinates D-fructose. The Extracellular portion of the chain corresponds to 40–68; sequence NSPSEFMKDFYNYTYYDRVGEYMNEFYLT. Asn51 carries N-linked (GlcNAc...) asparagine glycosylation. The helical transmembrane segment at 69 to 91 threads the bilayer; that stretch reads LLWSVTVSMFPFGGFLGSLMVGP. Residues 92 to 98 lie on the Cytoplasmic side of the membrane; the sequence is LVNNLGR. A helical membrane pass occupies residues 99–119; sequence KGTLLFNNIFSIVPALLMGFS. At 120–126 the chain is on the extracellular side; the sequence is ELAKSFE. The chain crosses the membrane as a helical span at residues 127–149; it reads MIIVARVLVGICAGLSSNVVPMY. The Cytoplasmic segment spans residues 150-161; the sequence is LGELAPKNWRGA. Residues 162–182 form a helical membrane-spanning segment; sequence LGVVPQLFITIGILVAQIFGL. Gln167 lines the D-fructose pocket. Residues 183–192 are Extracellular-facing; that stretch reads RSLLANEEGW. A helical transmembrane segment spans residues 193–213; sequence PILLGLTGIPAVLQLLFLPFF. Residues 214 to 277 are Cytoplasmic-facing; the sequence is PESPRYLLIQ…LFKMRSLRWQ (64 aa). A helical transmembrane segment spans residues 278 to 298; the sequence is VISIIVLMAGQQLSGVNAIYY. D-fructose contacts are provided by residues Gln288 and 296-298; that span reads IYY. Residues 299–313 are Extracellular-facing; that stretch reads YADQIYLSAGVNEDD. A helical transmembrane segment spans residues 314 to 334; it reads VQYVTAGTGAVNVLITVCAIF. Topologically, residues 335–342 are cytoplasmic; that stretch reads VVELMGRR. A helical membrane pass occupies residues 343 to 363; it reads FLLLLGFSVCFTACCVLTGAL. The Extracellular portion of the chain corresponds to 364–371; it reads ALQDVISW. Residues 372–394 form a helical membrane-spanning segment; it reads MPYVSIACVISYVIGHALGPSPI. Position 387 (His387) interacts with D-fructose. Topologically, residues 395–412 are cytoplasmic; that stretch reads PALLVTEIFLQSSRPAAY. Residues 413 to 433 form a helical membrane-spanning segment; it reads MVAGTVHWLSNFTVGLVFPFI. 419-420 contacts D-fructose; sequence HW. The Extracellular segment spans residues 434 to 439; sequence QVGLGA. The helical transmembrane segment at 440 to 460 threads the bilayer; that stretch reads YSFVIFAVICLLTTVYIFLII. Topologically, residues 461-501 are cytoplasmic; it reads PETKSKTFIEINRIFIKMNKVPGVHPEKEELKEFPPSTARQ.

It belongs to the major facilitator superfamily. Sugar transporter (TC 2.A.1.1) family. Glucose transporter subfamily.

Its subcellular location is the apical cell membrane. The protein localises to the cell membrane. It localises to the sarcolemma. The catalysed reaction is D-fructose(out) = D-fructose(in). Its function is as follows. Functions as a fructose transporter that has only low activity with other monosaccharides. Can mediate the uptake of deoxyglucose, but with low efficiency. Essential for fructose uptake in the small intestine. Plays a role in the regulation of salt uptake and blood pressure in response to dietary fructose. Required for the development of high blood pressure in response to high dietary fructose intake. This chain is Solute carrier family 2, facilitated glucose transporter member 5, found in Bos taurus (Bovine).